We begin with the raw amino-acid sequence, 198 residues long: Endonuclease V (198 aa).

Residues Asp-38 and Asp-101 each coordinate Mg(2+).

The protein belongs to the endonuclease V family. Requires Mg(2+) as cofactor.

It is found in the cytoplasm. It catalyses the reaction Endonucleolytic cleavage at apurinic or apyrimidinic sites to products with a 5'-phosphate.. Functionally, DNA repair enzyme involved in the repair of deaminated bases. Selectively cleaves double-stranded DNA at the second phosphodiester bond 3' to a deoxyinosine leaving behind the intact lesion on the nicked DNA. This is Endonuclease V from Saccharolobus islandicus (strain M.16.4 / Kamchatka #3) (Sulfolobus islandicus).